Consider the following 511-residue polypeptide: Sterol 14-alpha demethylase resB (511 aa).

A helical transmembrane segment spans residues 3-23 (ILWIVAYALLAFAASIALNLV). Cysteine 451 contacts heme.

The protein belongs to the cytochrome P450 family. Requires heme as cofactor.

It localises to the membrane. It catalyses the reaction a 14alpha-methyl steroid + 3 reduced [NADPH--hemoprotein reductase] + 3 O2 = a Delta(14) steroid + formate + 3 oxidized [NADPH--hemoprotein reductase] + 4 H2O + 4 H(+). The enzyme catalyses a 14alpha-methyl steroid + reduced [NADPH--hemoprotein reductase] + O2 = a 14alpha-hydroxymethyl steroid + oxidized [NADPH--hemoprotein reductase] + H2O + H(+). It carries out the reaction a 14alpha-hydroxymethyl steroid + reduced [NADPH--hemoprotein reductase] + O2 = a 14alpha-formyl steroid + oxidized [NADPH--hemoprotein reductase] + 2 H2O + H(+). The catalysed reaction is a 14alpha-formyl steroid + reduced [NADPH--hemoprotein reductase] + O2 = a Delta(14) steroid + formate + oxidized [NADPH--hemoprotein reductase] + H2O + 2 H(+). It catalyses the reaction lanosterol + 3 reduced [NADPH--hemoprotein reductase] + 3 O2 = 4,4-dimethyl-5alpha-cholesta-8,14,24-trien-3beta-ol + formate + 3 oxidized [NADPH--hemoprotein reductase] + 4 H2O + 4 H(+). The enzyme catalyses lanosterol + reduced [NADPH--hemoprotein reductase] + O2 = 32-hydroxylanosterol + oxidized [NADPH--hemoprotein reductase] + H2O + H(+). It carries out the reaction 32-hydroxylanosterol + reduced [NADPH--hemoprotein reductase] + O2 = 32-oxolanosterol + oxidized [NADPH--hemoprotein reductase] + 2 H2O + H(+). The catalysed reaction is 32-oxolanosterol + reduced [NADPH--hemoprotein reductase] + O2 = 4,4-dimethyl-5alpha-cholesta-8,14,24-trien-3beta-ol + formate + oxidized [NADPH--hemoprotein reductase] + H2O + 2 H(+). It catalyses the reaction eburicol + 3 reduced [NADPH--hemoprotein reductase] + 3 O2 = 14-demethyleburicol + formate + 3 oxidized [NADPH--hemoprotein reductase] + 4 H2O + 4 H(+). The enzyme catalyses eburicol + reduced [NADPH--hemoprotein reductase] + O2 = 32-hydroxyeburicol + oxidized [NADPH--hemoprotein reductase] + H2O + H(+). It carries out the reaction 32-hydroxyeburicol + reduced [NADPH--hemoprotein reductase] + O2 = 32-oxoeburicol + oxidized [NADPH--hemoprotein reductase] + 2 H2O + H(+). The catalysed reaction is 32-oxoeburicol + reduced [NADPH--hemoprotein reductase] + O2 = 14-demethyleburicol + formate + oxidized [NADPH--hemoprotein reductase] + H2O + 2 H(+). Its function is as follows. Sterol 14-alpha demethylase; part of the gene cluster that mediates the biosynthesis of the tetrahydropyranyl antifungal agent restricticin that acts as an inhibitor of CYP51 and blocks the ergosterol biosynthesis. Sterol 14-alpha-demethylase plays a critical role in the biosynthesis of ergosterol, the major sterol component in fungal membranes that participates in a variety of functions. ResB acts as a self-resistant CYP51 that contains mutations found in CYP51s isolated from azole resistance strains and that is not inhibited by the final product of the cluster, restricticin. This chain is Sterol 14-alpha demethylase resB, found in Aspergillus sclerotiorum.